Here is a 338-residue protein sequence, read N- to C-terminus: H(2)-forming methylenetetrahydromethanopterin dehydrogenase-related protein MJ0715 (338 aa).

This sequence belongs to the HMD family.

In Methanocaldococcus jannaschii (strain ATCC 43067 / DSM 2661 / JAL-1 / JCM 10045 / NBRC 100440) (Methanococcus jannaschii), this protein is H(2)-forming methylenetetrahydromethanopterin dehydrogenase-related protein MJ0715.